Consider the following 224-residue polypeptide: Phosphoribosylformylglycinamidine synthase subunit PurQ (224 aa).

The region spanning 2-224 (KFAVIQFPGS…SILNHAEVKA (223 aa)) is the Glutamine amidotransferase type-1 domain. Cysteine 86 acts as the Nucleophile in catalysis. Residues histidine 195 and glutamate 197 contribute to the active site.

As to quaternary structure, part of the FGAM synthase complex composed of 1 PurL, 1 PurQ and 2 PurS subunits.

The protein localises to the cytoplasm. The catalysed reaction is N(2)-formyl-N(1)-(5-phospho-beta-D-ribosyl)glycinamide + L-glutamine + ATP + H2O = 2-formamido-N(1)-(5-O-phospho-beta-D-ribosyl)acetamidine + L-glutamate + ADP + phosphate + H(+). It carries out the reaction L-glutamine + H2O = L-glutamate + NH4(+). It functions in the pathway purine metabolism; IMP biosynthesis via de novo pathway; 5-amino-1-(5-phospho-D-ribosyl)imidazole from N(2)-formyl-N(1)-(5-phospho-D-ribosyl)glycinamide: step 1/2. Part of the phosphoribosylformylglycinamidine synthase complex involved in the purines biosynthetic pathway. Catalyzes the ATP-dependent conversion of formylglycinamide ribonucleotide (FGAR) and glutamine to yield formylglycinamidine ribonucleotide (FGAM) and glutamate. The FGAM synthase complex is composed of three subunits. PurQ produces an ammonia molecule by converting glutamine to glutamate. PurL transfers the ammonia molecule to FGAR to form FGAM in an ATP-dependent manner. PurS interacts with PurQ and PurL and is thought to assist in the transfer of the ammonia molecule from PurQ to PurL. This is Phosphoribosylformylglycinamidine synthase subunit PurQ from Lactobacillus delbrueckii subsp. bulgaricus (strain ATCC 11842 / DSM 20081 / BCRC 10696 / JCM 1002 / NBRC 13953 / NCIMB 11778 / NCTC 12712 / WDCM 00102 / Lb 14).